We begin with the raw amino-acid sequence, 229 residues long: 5'-methylthioadenosine/S-adenosylhomocysteine nucleosidase (229 aa).

The Proton acceptor role is filled by E12. Residues G78, I152, and 173–174 (ME) contribute to the substrate site. The Proton donor role is filled by D197.

It belongs to the PNP/UDP phosphorylase family. MtnN subfamily.

It catalyses the reaction S-adenosyl-L-homocysteine + H2O = S-(5-deoxy-D-ribos-5-yl)-L-homocysteine + adenine. It carries out the reaction S-methyl-5'-thioadenosine + H2O = 5-(methylsulfanyl)-D-ribose + adenine. The enzyme catalyses 5'-deoxyadenosine + H2O = 5-deoxy-D-ribose + adenine. Its pathway is amino-acid biosynthesis; L-methionine biosynthesis via salvage pathway; S-methyl-5-thio-alpha-D-ribose 1-phosphate from S-methyl-5'-thioadenosine (hydrolase route): step 1/2. In terms of biological role, catalyzes the irreversible cleavage of the glycosidic bond in both 5'-methylthioadenosine (MTA) and S-adenosylhomocysteine (SAH/AdoHcy) to adenine and the corresponding thioribose, 5'-methylthioribose and S-ribosylhomocysteine, respectively. Also cleaves 5'-deoxyadenosine, a toxic by-product of radical S-adenosylmethionine (SAM) enzymes, into 5-deoxyribose and adenine. This is 5'-methylthioadenosine/S-adenosylhomocysteine nucleosidase from Baumannia cicadellinicola subsp. Homalodisca coagulata.